The primary structure comprises 590 residues: Asparagine synthetase [glutamine-hydrolyzing] (590 aa).

Cys2 (for GATase activity) is an active-site residue. One can recognise a Glutamine amidotransferase type-2 domain in the interval 2-185 (CGILAVLGCS…PGNLYSSRSG (184 aa)). Residues 50 to 54 (RLAII), 75 to 77 (NGE), and Asp98 contribute to the L-glutamine site. The 324-residue stretch at 193-516 (PQWYNETIPS…PQNSARFTVP (324 aa)) folds into the Asparagine synthetase domain. ATP-binding positions include Leu231, Val267, and 341–342 (SG).

The catalysed reaction is L-aspartate + L-glutamine + ATP + H2O = L-asparagine + L-glutamate + AMP + diphosphate + H(+). Its pathway is amino-acid biosynthesis; L-asparagine biosynthesis; L-asparagine from L-aspartate (L-Gln route): step 1/1. The protein is Asparagine synthetase [glutamine-hydrolyzing] of Asparagus officinalis (Garden asparagus).